The chain runs to 614 residues: Beta-glucosidase 33 (614 aa).

Positions 1 to 26 (MATATLTLFLGLLALTSTILSFNADA) are cleaved as a signal peptide. A beta-D-glucoside contacts are provided by residues Gln-113, His-217, and 262–263 (NE). Glu-263 serves as the catalytic Proton donor. Cys-282 and Cys-290 are joined by a disulfide. Asn-344 is a glycosylation site (N-linked (GlcNAc...) asparagine). An a beta-D-glucoside-binding site is contributed by Tyr-407. N-linked (GlcNAc...) asparagine glycans are attached at residues Asn-419, Asn-432, and Asn-439. Glu-479 lines the a beta-D-glucoside pocket. The active-site Nucleophile is the Glu-479. A glycan (N-linked (GlcNAc...) asparagine) is linked at Asn-491. A beta-D-glucoside-binding positions include Trp-529, 536–537 (EW), and Phe-545.

It belongs to the glycosyl hydrolase 1 family.

The catalysed reaction is Hydrolysis of terminal, non-reducing beta-D-glucosyl residues with release of beta-D-glucose.. The chain is Beta-glucosidase 33 from Arabidopsis thaliana (Mouse-ear cress).